The primary structure comprises 175 residues: ATP-dependent protease subunit HslV (175 aa).

Threonine 2 is an active-site residue. Residues glycine 158, cysteine 161, and threonine 164 each coordinate Na(+).

This sequence belongs to the peptidase T1B family. HslV subfamily. In terms of assembly, a double ring-shaped homohexamer of HslV is capped on each side by a ring-shaped HslU homohexamer. The assembly of the HslU/HslV complex is dependent on binding of ATP.

The protein resides in the cytoplasm. It carries out the reaction ATP-dependent cleavage of peptide bonds with broad specificity.. With respect to regulation, allosterically activated by HslU binding. Protease subunit of a proteasome-like degradation complex believed to be a general protein degrading machinery. This chain is ATP-dependent protease subunit HslV, found in Haemophilus influenzae (strain PittEE).